A 330-amino-acid polypeptide reads, in one-letter code: Phosphate acyltransferase (330 aa).

It belongs to the PlsX family. Homodimer. Probably interacts with PlsY.

It localises to the cytoplasm. The enzyme catalyses a fatty acyl-[ACP] + phosphate = an acyl phosphate + holo-[ACP]. The protein operates within lipid metabolism; phospholipid metabolism. Functionally, catalyzes the reversible formation of acyl-phosphate (acyl-PO(4)) from acyl-[acyl-carrier-protein] (acyl-ACP). This enzyme utilizes acyl-ACP as fatty acyl donor, but not acyl-CoA. The protein is Phosphate acyltransferase of Bacillus licheniformis (strain ATCC 14580 / DSM 13 / JCM 2505 / CCUG 7422 / NBRC 12200 / NCIMB 9375 / NCTC 10341 / NRRL NRS-1264 / Gibson 46).